A 142-amino-acid polypeptide reads, in one-letter code: Acetyltransferase SG1711 (142 aa).

Positions 1–142 constitute an N-acetyltransferase domain; it reads MEIRVFRHDD…GKRLIEDQEY (142 aa).

This sequence belongs to the acetyltransferase family. YpeA subfamily.

The sequence is that of Acetyltransferase SG1711 from Sodalis glossinidius (strain morsitans).